The chain runs to 203 residues: Glycerol-3-phosphate acyltransferase (203 aa).

5 helical membrane-spanning segments follow: residues 10–30 (MLIL…GLIL), 59–79 (GAAA…VLLA), 87–107 (AAQV…WLGF), 116–136 (FLGL…LSWL), and 160–180 (LVLL…LMVF).

This sequence belongs to the PlsY family. In terms of assembly, probably interacts with PlsX.

Its subcellular location is the cell inner membrane. It carries out the reaction an acyl phosphate + sn-glycerol 3-phosphate = a 1-acyl-sn-glycero-3-phosphate + phosphate. The protein operates within lipid metabolism; phospholipid metabolism. Its function is as follows. Catalyzes the transfer of an acyl group from acyl-phosphate (acyl-PO(4)) to glycerol-3-phosphate (G3P) to form lysophosphatidic acid (LPA). This enzyme utilizes acyl-phosphate as fatty acyl donor, but not acyl-CoA or acyl-ACP. The polypeptide is Glycerol-3-phosphate acyltransferase (Ruegeria pomeroyi (strain ATCC 700808 / DSM 15171 / DSS-3) (Silicibacter pomeroyi)).